Consider the following 204-residue polypeptide: Inner membrane-spanning protein YciB (204 aa).

A run of 5 helical transmembrane segments spans residues 48 to 68, 73 to 93, 102 to 122, 147 to 167, and 170 to 190; these read ILFA…LYFF, FESM…ATLM, WKPT…QLFT, GAWI…AYAF, and AVWV…FVVG.

This sequence belongs to the YciB family.

The protein resides in the cell inner membrane. Plays a role in cell envelope biogenesis, maintenance of cell envelope integrity and membrane homeostasis. The chain is Inner membrane-spanning protein YciB from Nitrosococcus oceani (strain ATCC 19707 / BCRC 17464 / JCM 30415 / NCIMB 11848 / C-107).